Here is a 325-residue protein sequence, read N- to C-terminus: Olfactory receptor 5H6 (325 aa).

The Extracellular portion of the chain corresponds to 1 to 41 (MFLYLCFIFQRTCSEEMEEENATLLTEFVLTGFLHQPDCKI). N-linked (GlcNAc...) asparagine glycosylation is present at Asn21. Residues 42–62 (PLFLAFLVIYLITIMGNLGLI) form a helical membrane-spanning segment. The Cytoplasmic segment spans residues 63–70 (VLIWKDPH). The chain crosses the membrane as a helical span at residues 71–91 (LHIPMYLFLGSLAFVDASLSS). At 92-115 (TVTPKMLINFLAKSKMISLSECMV) the chain is on the extracellular side. A disulfide bridge connects residues Cys113 and Cys205. A helical membrane pass occupies residues 116 to 136 (QFFSLVTTVTTECFLLATMAY). The Cytoplasmic portion of the chain corresponds to 137–155 (DRYVAICKALLYPVIMTNE). A helical membrane pass occupies residues 156-176 (LCIQLLVLSFIGGLLHALIHE). At 177-212 (AFSFRLTFCNSNIIQHFYCDIIPLLKISCTDSSINF) the chain is on the extracellular side. A helical transmembrane segment spans residues 213-233 (LMVFIFAGSVQVFTIGTILIS). Over 234–253 (YTIILFTILEKKSIKGIRKA) the chain is Cytoplasmic. The chain crosses the membrane as a helical span at residues 254–274 (VSTCGAHLLSVSLYYGPLTFK). Residues 275-287 (YLGSASPQADDQD) lie on the Extracellular side of the membrane. The helical transmembrane segment at 288 to 308 (MMESLFYTVIVPLLNPMIYSL) threads the bilayer. The Cytoplasmic segment spans residues 309–325 (RNKQVIASFTKMFKSNV).

Belongs to the G-protein coupled receptor 1 family.

It is found in the cell membrane. Odorant receptor. This chain is Olfactory receptor 5H6 (OR5H6), found in Homo sapiens (Human).